Reading from the N-terminus, the 275-residue chain is uncharacterized protein (275 aa).

Polar residues predominate over residues 148-158 (TFPTTAPSITP). The interval 148–173 (TFPTTAPSITPGNKEGEKTTSTDTDE) is disordered. Residues 187–207 (ILIAVTLLLSGVAIIVFVIFE) traverse the membrane as a helical segment. Residues 234–264 (GQPPGTAESKPDSQPQKVGQDAANSSNPKKA) are disordered. Residues 245–261 (DSQPQKVGQDAANSSNP) show a composition bias toward polar residues.

The protein resides in the membrane. This is an uncharacterized protein from Homo sapiens (Human).